A 67-amino-acid polypeptide reads, in one-letter code: Disintegrin EC3A (67 aa).

The Disintegrin domain maps to asparagine 1–lysine 65. Cystine bridges form between cysteine 6–cysteine 29, cysteine 20–cysteine 26, cysteine 25–cysteine 50, and cysteine 38–cysteine 57. A Cell attachment site; atypical (VGD) motif is present at residues valine 42–aspartate 44.

This sequence belongs to the venom metalloproteinase (M12B) family. P-II subfamily. P-IIe sub-subfamily. Heterodimer with EC3B; disulfide-linked. Expressed by the venom gland.

The protein localises to the secreted. Inhibits adhesion of cells expressing alpha-4/beta-1 (ITGA4/ITGB1) and alpha-4/beta-7 (ITGA4/ITGB7) integrins to the natural ligands vascular cell adhesion molecule 1 (VCAM-1) and mucosal addressin cell adhesion molecule 1 (MADCAM-1). It is also a weaker inhibitor of alpha-5/beta-1 (ITGA5/ITGB1) and alpha-2b/beta-3 (ITGA2B/ITGB3) integrins. The inhibitory activity of EC3 towards alpha-4 integrins is associated with the MLD sequence of EC3B subunit. The ability of EC3 to inhibit ITGA5/ITGB1 resides in both subunits A and B. This chain is Disintegrin EC3A, found in Echis carinatus (Saw-scaled viper).